Reading from the N-terminus, the 116-residue chain is Histone H2B (116 aa).

Over residues 1–11 (TSGKAAKKAGK) the composition is skewed to basic residues. Positions 1-25 (TSGKAAKKAGKAQKSITKGDKKKRK) are disordered. Residues Lys4, Lys11, and Lys14 each carry the N6-acetyllysine modification. O-linked (GlcNAc) serine glycosylation is present at Ser103. A Glycyl lysine isopeptide (Lys-Gly) (interchain with G-Cter in ubiquitin) cross-link involves residue Lys111.

As to quaternary structure, the nucleosome is a histone octamer containing two molecules each of H2A, H2B, H3 and H4 assembled in one H3-H4 heterotetramer and two H2A-H2B heterodimers. The octamer wraps approximately 147 bp of DNA. Post-translationally, monoubiquitination gives a specific tag for epigenetic transcriptional activation and is also prerequisite for histone H3 'Lys-4' and 'Lys-79' methylation. GlcNAcylation at Ser-103 promotes monoubiquitination of Lys-111. It fluctuates in response to extracellular glucose, and associates with transcribed genes.

Its subcellular location is the nucleus. It localises to the chromosome. Its function is as follows. Core component of nucleosome. Nucleosomes wrap and compact DNA into chromatin, limiting DNA accessibility to the cellular machineries which require DNA as a template. Histones thereby play a central role in transcription regulation, DNA repair, DNA replication and chromosomal stability. DNA accessibility is regulated via a complex set of post-translational modifications of histones, also called histone code, and nucleosome remodeling. A mixture of histones H2B and H4 has antimicrobial activity against the Gram-positive bacterium M.luteus. This chain is Histone H2B, found in Penaeus vannamei (Whiteleg shrimp).